The following is a 135-amino-acid chain: ATP synthase epsilon chain, chloroplastic (135 aa).

Belongs to the ATPase epsilon chain family. As to quaternary structure, F-type ATPases have 2 components, CF(1) - the catalytic core - and CF(0) - the membrane proton channel. CF(1) has five subunits: alpha(3), beta(3), gamma(1), delta(1), epsilon(1). CF(0) has three main subunits: a, b and c.

Its subcellular location is the plastid. The protein resides in the chloroplast thylakoid membrane. In terms of biological role, produces ATP from ADP in the presence of a proton gradient across the membrane. The protein is ATP synthase epsilon chain, chloroplastic of Stigeoclonium helveticum (Green alga).